Here is a 236-residue protein sequence, read N- to C-terminus: MEHKAPLVEFLGLTFNLSDMLMITITCLIVFIIAVAATRSLQLRPTGMQNFMEWVFDFVRGIINSTMDWQTGGRFLTLGVTLIMYVFVANMLGLPFSVHVNGELWWKSPTADATVTLTLAVMVVALTHYYGVKMKGASDYLRDYTRPVAWLFPLKIIEEFANTLTLGLRLFGNIYAGEILLGLLASLGTHYGVLGAVGEHSMMVWQAFSIFVGTIQAFIFTMLTMVYMAHKVSHDH.

5 helical membrane-spanning segments follow: residues 17–37 (LSDMLMITITCLIVFIIAVAA), 75–95 (FLTLGVTLIMYVFVANMLGLP), 112–132 (DATVTLTLAVMVVALTHYYGV), 174–194 (IYAGEILLGLLASLGTHYGVL), and 208–228 (FSIFVGTIQAFIFTMLTMVYM).

This sequence belongs to the ATPase A chain family. F-type ATPases have 2 components, CF(1) - the catalytic core - and CF(0) - the membrane proton channel. CF(1) has five subunits: alpha(3), beta(3), gamma(1), delta(1), epsilon(1). CF(0) has three main subunits: a(1), b(2) and c(9-12). The alpha and beta chains form an alternating ring which encloses part of the gamma chain. CF(1) is attached to CF(0) by a central stalk formed by the gamma and epsilon chains, while a peripheral stalk is formed by the delta and b chains.

The protein localises to the cell membrane. In terms of biological role, key component of the proton channel; it plays a direct role in the translocation of protons across the membrane. In Geobacillus stearothermophilus (Bacillus stearothermophilus), this protein is ATP synthase subunit a.